Here is a 76-residue protein sequence, read N- to C-terminus: MKKDIHPDYHTIKVEMTDGTQFETRSTWGKEGEVLKLEIDPKSHAAWTGGKQKLMDKGRVSKFNKKFQNFRSEKKD.

It belongs to the bacterial ribosomal protein bL31 family. Type A subfamily. As to quaternary structure, part of the 50S ribosomal subunit.

In terms of biological role, binds the 23S rRNA. The chain is Large ribosomal subunit protein bL31 (rpmE) from Pelagibacter ubique (strain HTCC1062).